We begin with the raw amino-acid sequence, 258 residues long: Probable glycerol uptake facilitator protein (258 aa).

The next 2 helical transmembrane spans lie at 11–31 (WWFLAELIGTFILIIFGNGAV) and 50–70 (TVALTWGIGVLFGVLTANAIF). The NPA 1 signature appears at 77 to 79 (NPA). 3 helical membrane passes run 95-115 (ALIWPGFVIGILAQFLGAMIA), 152-172 (FLTEFIATLILIGGVVAASHF), and 180-200 (VPPGFMGLWLVAGIIIAFGGA). The NPA 2 motif lies at 206–208 (NPA). The chain crosses the membrane as a helical span at residues 233–253 (WIPVIAPLSAGLVLSIIIGFS).

It belongs to the MIP/aquaporin (TC 1.A.8) family.

It is found in the cell membrane. The catalysed reaction is glycerol(in) = glycerol(out). Mediates glycerol diffusion across the cytoplasmic membrane via a pore-type mechanism. The polypeptide is Probable glycerol uptake facilitator protein (glpF) (Mycoplasma genitalium (strain ATCC 33530 / DSM 19775 / NCTC 10195 / G37) (Mycoplasmoides genitalium)).